A 514-amino-acid polypeptide reads, in one-letter code: MDTATTTCSAVDLSALLSSSSNSTSSLAAATFLCSQISNISNKLSDTTYAVDNTYLLFSAYLVFAMQLGFAMLCAGSVRAKNTMNIMLTNVLDAAAGAISYYLFGFAFAFGTPSNGFIGRHHSFFALSSYPERPGSDFSFFLYQWAFAIAAAGITSGSIAERTQFVAYLIYSTFLTGFVYPTVSHWFWSSDGWASASRSDNNLLFGSGAIDFAGSGVVHMVGGIAGLCGALVEGPRIGRFDRSGRSVALRGHSASLVVLGTFLLWFGWYGFNPGSFLTILKGYDKSRPYYGQWSAVGRTAVTTTLSGCTAALTTLFSKRLLAGHWNVIDVCNGLLGGFAAITSGCAVVEPWAAIVCGFVASWVLIGFNLLAKKLKYDDPLEAAQLHGGCGAWGLIFTGLFARKEYVNEIYSGDRPYGLFMGGGGKLLAAQIVQIIVIVGWVTVTMGPLFYGLHKMNLLRISAEDEMAGMDMTRHGGFAYAYNDEDDVSTKPWGHFAGRVEPTSRSSTPTPTLTV.

The next 11 membrane-spanning stretches (helical) occupy residues 56-76 (LLFSAYLVFAMQLGFAMLCAG), 91-111 (VLDAAAGAISYYLFGFAFAFG), 140-160 (FFLYQWAFAIAAAGITSGSIA), 165-185 (FVAYLIYSTFLTGFVYPTVSH), 212-232 (FAGSGVVHMVGGIAGLCGALV), 257-277 (VVLGTFLLWFGWYGFNPGSFL), 291-313 (GQWSAVGRTAVTTTLSGCTAALT), 328-348 (IDVCNGLLGGFAAITSGCAVV), 351-371 (WAAIVCGFVASWVLIGFNLLA), 380-400 (LEAAQLHGGCGAWGLIFTGLF), and 431-451 (IVQIIVIVGWVTVTMGPLFYG). Phosphothreonine is present on Thr472.

This sequence belongs to the ammonia transporter channel (TC 1.A.11.2) family. In terms of tissue distribution, high expression in root.

The protein resides in the membrane. Its function is as follows. Ammonium transporter probably involved in ammonium uptake from the soil. This chain is Ammonium transporter 1 member 2 (AMT1-2), found in Arabidopsis thaliana (Mouse-ear cress).